The sequence spans 175 residues: MFHGTTILCVRRDGKVAIASDGQVSLEKTVMKNTAKKVRRLGEGQVLAGFAGSTADAFTLFERFEAKLKEHQKNMARACVELGKDWRTDRFLRRLEALLIVADKEKTFILSGAGDVIEPDYGIAAVGSGGPYAFAAARALMAHTQMSARDVVHQSLTIAGEIDIYTNANISIEEL.

Thr-5 is an active-site residue. Gly-160, Asp-163, and Thr-166 together coordinate Na(+).

Belongs to the peptidase T1B family. HslV subfamily. In terms of assembly, a double ring-shaped homohexamer of HslV is capped on each side by a ring-shaped HslU homohexamer. The assembly of the HslU/HslV complex is dependent on binding of ATP.

The protein localises to the cytoplasm. The enzyme catalyses ATP-dependent cleavage of peptide bonds with broad specificity.. Allosterically activated by HslU binding. Protease subunit of a proteasome-like degradation complex believed to be a general protein degrading machinery. This is ATP-dependent protease subunit HslV from Myxococcus xanthus.